The following is a 1033-amino-acid chain: Calcium-transporting ATPase 3, plasma membrane-type (1033 aa).

The Cytoplasmic segment spans residues 1-180 (MHSGVNGCCP…FVWEALEDTT (180 aa)). Transmembrane regions (helical) follow at residues 181 to 201 (LIIL…TEGW) and 204 to 224 (GAHD…VTGT). The Cytoplasmic portion of the chain corresponds to 225–268 (SNYQQSLQFRDLDKEKRKILVQVTRNGLRQRVLIDDLLPGDAVH). Helical transmembrane passes span 269–289 (LAVG…SVLV) and 362–382 (IGKI…QGII). Residues 383–405 (GQKYLDGLLLSWSGDDVLEILDH) are Cytoplasmic-facing. The helical transmembrane segment at 406–426 (FAVAVTIVVVAVPEGLPLAVT) threads the bilayer. Catalysis depends on Asp461, which acts as the 4-aspartylphosphate intermediate. The Mg(2+) site is built by Asp762 and Asp766. Residues 823–843 (FQLTVNVVALLVNFTSACFTG) form a helical membrane-spanning segment. Over 844 to 846 (DAP) the chain is Cytoplasmic. The next 2 helical transmembrane spans lie at 847–867 (LTAV…ALAL) and 928–948 (IVLN…NEIS). Residues 949-965 (SREMEDINVLRGMAGNS) lie on the Cytoplasmic side of the membrane. 2 helical membrane passes run 966 to 986 (IFLG…QFLG) and 999 to 1019 (WLIS…IKLI). At 1020-1033 (AVEPHEKADTRRTP) the chain is on the cytoplasmic side.

This sequence belongs to the cation transport ATPase (P-type) (TC 3.A.3) family. Type IIB subfamily.

Its subcellular location is the membrane. The enzyme catalyses Ca(2+)(in) + ATP + H2O = Ca(2+)(out) + ADP + phosphate + H(+). With respect to regulation, activated by calmodulin. In terms of biological role, this magnesium-dependent enzyme catalyzes the hydrolysis of ATP coupled with the translocation of calcium from the cytosol out of the cell, into the endoplasmic reticulum, or into organelles. This Oryza sativa subsp. japonica (Rice) protein is Calcium-transporting ATPase 3, plasma membrane-type.